The sequence spans 76 residues: Sec-independent protein translocase protein TatA (76 aa).

The chain crosses the membrane as a helical span at residues 1–21; sequence MLGGLTGWHLLIILAVILLLF. Positions 44 to 57 are enriched in basic and acidic residues; that stretch reads VNEMKKDGDKDKGE. A disordered region spans residues 44–76; the sequence is VNEMKKDGDKDKGEGGSTAPATDTGASSEQNSK. Residues 62-76 are compositionally biased toward polar residues; the sequence is APATDTGASSEQNSK.

Belongs to the TatA/E family. In terms of assembly, the Tat system comprises two distinct complexes: a TatABC complex, containing multiple copies of TatA, TatB and TatC subunits, and a separate TatA complex, containing only TatA subunits. Substrates initially bind to the TatABC complex, which probably triggers association of the separate TatA complex to form the active translocon.

It localises to the cell membrane. Part of the twin-arginine translocation (Tat) system that transports large folded proteins containing a characteristic twin-arginine motif in their signal peptide across membranes. TatA could form the protein-conducting channel of the Tat system. The protein is Sec-independent protein translocase protein TatA of Leifsonia xyli subsp. xyli (strain CTCB07).